Here is a 74-residue protein sequence, read N- to C-terminus: Antitoxin VapB39 (74 aa).

Antitoxin component of a type II toxin-antitoxin (TA) system. The sequence is that of Antitoxin VapB39 (vapB39) from Mycobacterium tuberculosis (strain CDC 1551 / Oshkosh).